The primary structure comprises 275 residues: 2,3,4,5-tetrahydropyridine-2,6-dicarboxylate N-succinyltransferase (275 aa).

Residues R104 and D141 each contribute to the substrate site.

This sequence belongs to the transferase hexapeptide repeat family. Homotrimer.

The protein localises to the cytoplasm. It carries out the reaction (S)-2,3,4,5-tetrahydrodipicolinate + succinyl-CoA + H2O = (S)-2-succinylamino-6-oxoheptanedioate + CoA. Its pathway is amino-acid biosynthesis; L-lysine biosynthesis via DAP pathway; LL-2,6-diaminopimelate from (S)-tetrahydrodipicolinate (succinylase route): step 1/3. The protein is 2,3,4,5-tetrahydropyridine-2,6-dicarboxylate N-succinyltransferase of Mannheimia succiniciproducens (strain KCTC 0769BP / MBEL55E).